A 303-amino-acid chain; its full sequence is Guanosine-inosine kinase (303 aa).

This sequence belongs to the carbohydrate kinase PfkB family. Homodimer. Requires Mg(2+) as cofactor.

The catalysed reaction is guanosine + ATP = GMP + ADP + H(+). It catalyses the reaction inosine + ATP = IMP + ADP + H(+). The protein operates within purine metabolism; IMP biosynthesis via salvage pathway; IMP from inosine: step 1/1. It participates in purine metabolism; GMP biosynthesis via salvage pathway. Its activity is regulated as follows. Kinase activity is stimulated by pyrimidine nucleotides, especially CMP and CTP, and inhibited by AMP, ADP and GMP. Activity is stimulated by potassium or ammonium ions. Functionally, catalyzes the phosphorylation of guanosine and inosine to GMP and IMP, respectively. Can also use deoxyguanosine. Shows a strong preference for guanosine. dATP, GTP and dGTP can serve as phosphate donors. This Exiguobacterium acetylicum (Brevibacterium acetylicum) protein is Guanosine-inosine kinase.